The primary structure comprises 175 residues: Lactobacillus up-regulated protein (175 aa).

Residues 1 to 18 (MRSIFLAVLGLMATSSLA) form the signal peptide. A glycan (N-linked (GlcNAc...) asparagine) is linked at N59.

The chain is Lactobacillus up-regulated protein (lbuA) from Emericella nidulans (strain FGSC A4 / ATCC 38163 / CBS 112.46 / NRRL 194 / M139) (Aspergillus nidulans).